A 406-amino-acid polypeptide reads, in one-letter code: Bifunctional enzyme IspD/IspF (406 aa).

Residues 1-247 (MSLIRVNGEA…AFFFNPAKDT (247 aa)) are 2-C-methyl-D-erythritol 4-phosphate cytidylyltransferase. The tract at residues 248–406 (FIGMGFDTHA…HVSMRYKQKL (159 aa)) is 2-C-methyl-D-erythritol 2,4-cyclodiphosphate synthase. 2 residues coordinate a divalent metal cation: Asp254 and His256. 4-CDP-2-C-methyl-D-erythritol 2-phosphate-binding positions include 254 to 256 (DTH) and 280 to 281 (HS). His288 contacts a divalent metal cation. 4-CDP-2-C-methyl-D-erythritol 2-phosphate contacts are provided by residues 302–304 (DIG), 307–311 (FPDND), 378–381 (TTME), Phe385, and Lys388.

It in the N-terminal section; belongs to the IspD/TarI cytidylyltransferase family. IspD subfamily. The protein in the C-terminal section; belongs to the IspF family. A divalent metal cation serves as cofactor.

It carries out the reaction 2-C-methyl-D-erythritol 4-phosphate + CTP + H(+) = 4-CDP-2-C-methyl-D-erythritol + diphosphate. The catalysed reaction is 4-CDP-2-C-methyl-D-erythritol 2-phosphate = 2-C-methyl-D-erythritol 2,4-cyclic diphosphate + CMP. It participates in isoprenoid biosynthesis; isopentenyl diphosphate biosynthesis via DXP pathway; isopentenyl diphosphate from 1-deoxy-D-xylulose 5-phosphate: step 2/6. Its pathway is isoprenoid biosynthesis; isopentenyl diphosphate biosynthesis via DXP pathway; isopentenyl diphosphate from 1-deoxy-D-xylulose 5-phosphate: step 4/6. Bifunctional enzyme that catalyzes the formation of 4-diphosphocytidyl-2-C-methyl-D-erythritol from CTP and 2-C-methyl-D-erythritol 4-phosphate (MEP) (IspD), and catalyzes the conversion of 4-diphosphocytidyl-2-C-methyl-D-erythritol 2-phosphate (CDP-ME2P) to 2-C-methyl-D-erythritol 2,4-cyclodiphosphate (ME-CPP) with a corresponding release of cytidine 5-monophosphate (CMP) (IspF). The polypeptide is Bifunctional enzyme IspD/IspF (Helicobacter pylori (strain HPAG1)).